The chain runs to 391 residues: N-acetylaspartylglutamate synthase A (391 aa).

The region spanning 115 to 300 (FQELAGHGVP…VGGIIADYTM (186 aa)) is the ATP-grasp domain. ATP-binding positions include K154, 189–199 (QKYVKESHGKD), and R215. Mg(2+)-binding residues include D260, E273, and N275. D260, E273, and N275 together coordinate Mn(2+). S319 carries the post-translational modification Phosphoserine. Polar residues predominate over residues 341-350 (TINSGSTSSE). The interval 341 to 379 (TINSGSTSSESEPELGEIRDSSASTMGAPPSMLPEPGYN) is disordered.

The protein belongs to the RimK family. The cofactor is Mg(2+). Requires Mn(2+) as cofactor.

It localises to the cytoplasm. It catalyses the reaction N-acetyl-L-aspartate + L-glutamate + ATP = N-acetyl-L-aspartyl-L-glutamate + ADP + phosphate + H(+). It carries out the reaction N-acetyl-L-aspartate + 2 L-glutamate + 2 ATP = N-acetyl-L-aspartyl-L-glutamyl-L-glutamate + 2 ADP + 2 phosphate + 2 H(+). Its function is as follows. Catalyzes the synthesis of N-acetyl-L-aspartyl-L-glutamate (NAAG) and N-acetyl-L-aspartyl-L-glutamyl-L-glutamate. The polypeptide is N-acetylaspartylglutamate synthase A (RIMKLA) (Homo sapiens (Human)).